The primary structure comprises 462 residues: uncharacterized protein (462 aa).

The disordered stretch occupies residues 1-108; it reads MEDSNTNKDI…NGQDDQDEMD (108 aa). Basic and acidic residues predominate over residues 36 to 51; it reads TVERILERKQKERESK. Positions 64–95 are enriched in low complexity; that stretch reads SSPSSLLSSPISSNDNNNNNNNNNNESFDINN. A coiled-coil region spans residues 119–150; sequence LLKRKAALAAKKKESLAEQMKKYNQQYDSIIS. Residues 188–208 are disordered; sequence SKLQSLNNNTSPSTSSSNLID. Residues 190-208 are compositionally biased toward low complexity; the sequence is LQSLNNNTSPSTSSSNLID.

This is an uncharacterized protein from Dictyostelium discoideum (Social amoeba).